The following is a 78-amino-acid chain: Small ribosomal subunit protein bS16 (78 aa).

It belongs to the bacterial ribosomal protein bS16 family.

This chain is Small ribosomal subunit protein bS16, found in Maridesulfovibrio salexigens (strain ATCC 14822 / DSM 2638 / NCIMB 8403 / VKM B-1763) (Desulfovibrio salexigens).